Reading from the N-terminus, the 248-residue chain is Small ribosomal subunit protein uS3 (248 aa).

The region spanning 38 to 106 is the KH type-2 domain; that stretch reads IREFLSEGLE…QVQLNILEVK (69 aa). Residues 214–229 show a composition bias toward basic and acidic residues; that stretch reads SLMNARDERPSRGGRR. Residues 214–248 form a disordered region; sequence SLMNARDERPSRGGRRERPRRGGARRQRAEKKQEG. Residues 230–242 show a composition bias toward basic residues; the sequence is ERPRRGGARRQRA.

It belongs to the universal ribosomal protein uS3 family. In terms of assembly, part of the 30S ribosomal subunit. Forms a tight complex with proteins S10 and S14.

Binds the lower part of the 30S subunit head. Binds mRNA in the 70S ribosome, positioning it for translation. This is Small ribosomal subunit protein uS3 from Corynebacterium urealyticum (strain ATCC 43042 / DSM 7109).